Here is a 375-residue protein sequence, read N- to C-terminus: Leucoanthocyanidin dioxygenase 1 (375 aa).

The region spanning 218–317 (LLLQLKINYY…RLSWVVFCEP (100 aa)) is the Fe2OG dioxygenase domain. His-242, Asp-244, and His-298 together coordinate Fe cation. 2-oxoglutarate is bound at residue Arg-308.

The protein belongs to the iron/ascorbate-dependent oxidoreductase family. L-ascorbate serves as cofactor. It depends on Fe(2+) as a cofactor.

It catalyses the reaction a (2R,3S,4S)-leucoanthocyanidin + 2-oxoglutarate + O2 = a 4-H-anthocyanidin with a 3-hydroxy group + succinate + CO2 + 2 H2O. Its pathway is pigment biosynthesis; anthocyanin biosynthesis. In terms of biological role, involved in anthocyanin and protoanthocyanidin biosynthesis by catalyzing the oxidation of leucoanthocyanidins into anthocyanidins. The polypeptide is Leucoanthocyanidin dioxygenase 1 (Oryza sativa subsp. japonica (Rice)).